A 507-amino-acid chain; its full sequence is Probable bifunctional methylthioribulose-1-phosphate dehydratase/enolase-phosphatase E1 (507 aa).

The residue at position 2 (Ala-2) is an N-acetylalanine. The segment at 2-237 (AVAAAAMIGL…AIKLHQLGLD (236 aa)) is methylthioribulose-1-phosphate dehydratase. Cys-109 contributes to the substrate binding site. Residues His-127 and His-129 each contribute to the Zn(2+) site. Glu-152 functions as the Proton donor/acceptor in the catalytic mechanism. His-202 provides a ligand contact to Zn(2+). Positions 268–507 (IVLDIEGTTT…FKTVTSFSQI (240 aa)) are enolase-phosphatase E1. Positions 271 and 273 each coordinate Mg(2+). Substrate-binding positions include 406-407 (SS) and Lys-440. Asp-466 contributes to the Mg(2+) binding site.

In the N-terminal section; belongs to the aldolase class II family. MtnB subfamily. The protein in the C-terminal section; belongs to the HAD-like hydrolase superfamily. MasA/MtnC family. Zn(2+) serves as cofactor. It depends on Mg(2+) as a cofactor.

The catalysed reaction is 5-(methylsulfanyl)-D-ribulose 1-phosphate = 5-methylsulfanyl-2,3-dioxopentyl phosphate + H2O. It catalyses the reaction 5-methylsulfanyl-2,3-dioxopentyl phosphate + H2O = 1,2-dihydroxy-5-(methylsulfanyl)pent-1-en-3-one + phosphate. It functions in the pathway amino-acid biosynthesis; L-methionine biosynthesis via salvage pathway; L-methionine from S-methyl-5-thio-alpha-D-ribose 1-phosphate: step 2/6. Its pathway is amino-acid biosynthesis; L-methionine biosynthesis via salvage pathway; L-methionine from S-methyl-5-thio-alpha-D-ribose 1-phosphate: step 3/6. The protein operates within amino-acid biosynthesis; L-methionine biosynthesis via salvage pathway; L-methionine from S-methyl-5-thio-alpha-D-ribose 1-phosphate: step 4/6. The protein is Probable bifunctional methylthioribulose-1-phosphate dehydratase/enolase-phosphatase E1 of Arabidopsis thaliana (Mouse-ear cress).